Here is a 390-residue protein sequence, read N- to C-terminus: Alkanesulfonate monooxygenase (390 aa).

This sequence belongs to the SsuD family.

The catalysed reaction is an alkanesulfonate + FMNH2 + O2 = an aldehyde + FMN + sulfite + H2O + 2 H(+). Functionally, catalyzes the desulfonation of aliphatic sulfonates. The protein is Alkanesulfonate monooxygenase of Cupriavidus taiwanensis (strain DSM 17343 / BCRC 17206 / CCUG 44338 / CIP 107171 / LMG 19424 / R1) (Ralstonia taiwanensis (strain LMG 19424)).